The primary structure comprises 314 residues: Probable cell division protein WhiA (314 aa).

The H-T-H motif DNA-binding region spans 274-308 (SLKELGEMVSTGPISKSGVNHRLRKLNDLADKIRN).

The protein belongs to the WhiA family.

Involved in cell division and chromosome segregation. The chain is Probable cell division protein WhiA from Staphylococcus aureus (strain USA300).